Reading from the N-terminus, the 386-residue chain is N-terminal EF-hand calcium-binding protein 2 (386 aa).

Arg10 is modified (omega-N-methylarginine). Position 42 is an asymmetric dimethylarginine (Arg42). EF-hand domains lie at 60–95 (GGTA…GVLN) and 96–129 (EKEL…HMGD). Ca(2+) is bound by residues Asp73, Asn75, Asp77, Lys79, Glu84, Asp107, Asp109, Thr111, His113, and Glu118. Positions 170 to 201 (LKETANQIQSLLSSVESAVEAIEEQTSQLRQN) form a coiled coil. The ABM domain maps to 286-375 (QLVRQEMAVC…SQPEALSRIL (90 aa)).

In terms of assembly, interacts (calcium-dependent) with ADORA2A and GRM5. In terms of tissue distribution, expressed in brain. Expressed in the spinal dorsal horn with especially strong expression in lamina IIi; found in excitory synaptic boutons and in ependymal cells (at protein level).

It localises to the cytoplasm. It is found in the cell projection. Its subcellular location is the dendrite. The protein resides in the axon. The protein localises to the cell membrane. Its function is as follows. May act as a signaling scaffold protein that senses intracellular calcium. Can modulate ligand-induced internalization of ADORA2A and coupling efficiency of mGluR5/GRM5; for both receptors may regulate signaling activity such as promoting MAPK1/3 (ERK1/2) activation. The sequence is that of N-terminal EF-hand calcium-binding protein 2 (NECAB2) from Homo sapiens (Human).